Reading from the N-terminus, the 98-residue chain is NADH-ubiquinone oxidoreductase chain 4L (98 aa).

3 helical membrane passes run 1 to 21, 36 to 56, and 61 to 81; these read MVLIKLNIIMAFMLALTGVLI, MMLSLFIFMAAVITHFHMFSI, and LILLVFSACEAGVGLALLVTI.

The protein belongs to the complex I subunit 4L family. As to quaternary structure, core subunit of respiratory chain NADH dehydrogenase (Complex I) which is composed of 45 different subunits.

The protein localises to the mitochondrion inner membrane. The enzyme catalyses a ubiquinone + NADH + 5 H(+)(in) = a ubiquinol + NAD(+) + 4 H(+)(out). In terms of biological role, core subunit of the mitochondrial membrane respiratory chain NADH dehydrogenase (Complex I) which catalyzes electron transfer from NADH through the respiratory chain, using ubiquinone as an electron acceptor. Part of the enzyme membrane arm which is embedded in the lipid bilayer and involved in proton translocation. The protein is NADH-ubiquinone oxidoreductase chain 4L (MT-ND4L) of Metachirus nudicaudatus (Brown four-eyed opossum).